We begin with the raw amino-acid sequence, 317 residues long: Lysosomal-associated transmembrane protein 4B (317 aa).

The disordered stretch occupies residues 25 to 73 (AFGAKGTDPAEARSSRGIEEAGPRAHGRAGREPERRRSRQQRRGGLQAR). Residues 32–59 (DPAEARSSRGIEEAGPRAHGRAGREPER) show a composition bias toward basic and acidic residues. The next 4 membrane-spanning stretches (helical) occupy residues 117–137 (ILLGVWYLIINAVVLLILLSA), 163–183 (MCIAIAISLLMILICAMATYG), 191–211 (WIIPFFCYQIFDFALNMLVAI), and 244–264 (CLVLIILLFISIILTFKGYLI). Residues 205 to 221 (LNMLVAITVLIYPNSIQ) are required for NEDD4 interaction.

It belongs to the LAPTM4/LAPTM5 transporter family. Homooligomer; upon reaching the lysosomes. Interacts with MCOLN1. Interacts with NEDD4; may play a role in the lysosomal sorting of LAPTM4B; enhances HGS association with NEDD4; mediates inhibition of EGFR degradation. Interacts with PIP5K1C; promotes SNX5 association with LAPTM4B; kinase activity of PIP5K1C is required; interaction is regulated by phosphatidylinositol 4,5-bisphosphate generated by PIP5K1C. Interacts with HGS; promotes HGS ubiquitination. Interacts with SNX5. Interacts with SLC3A2 and SLC7A5; recruits SLC3A2 and SLC7A5 to lysosomes to promote leucine uptake into these organelles and is required for mTORC1 activation. Interacts with LRRC32; decreases TGFB1 production in regulatory T cells. Interacts with BECN1; competes with EGFR for LAPTM4B binding; regulates EGFR activity. Interacts with EGFR; positively correlates with EGFR activation. In terms of processing, undergoes proteolytic cleavage following delivery to the lysosomes. Post-translationally, ubiquitinated by NEDD4.

The protein resides in the endomembrane system. The protein localises to the late endosome membrane. It is found in the cell membrane. It localises to the cell projection. Its subcellular location is the lysosome membrane. The protein resides in the endosome membrane. The protein localises to the endosome. It is found in the multivesicular body membrane. It localises to the multivesicular body lumen. Required for optimal lysosomal function. Blocks EGF-stimulated EGFR intraluminal sorting and degradation. Conversely by binding with the phosphatidylinositol 4,5-bisphosphate, regulates its PIP5K1C interaction, inhibits HGS ubiquitination and relieves LAPTM4B inhibition of EGFR degradation. Recruits SLC3A2 and SLC7A5 (the Leu transporter) to the lysosome, promoting entry of leucine and other essential amino acid (EAA) into the lysosome, stimulating activation of proton-transporting vacuolar (V)-ATPase protein pump (V-ATPase) and hence mTORC1 activation. Plays a role as negative regulator of TGFB1 production in regulatory T cells. Binds ceramide and facilitates its exit from late endosome in order to control cell death pathways. The sequence is that of Lysosomal-associated transmembrane protein 4B from Homo sapiens (Human).